An 890-amino-acid polypeptide reads, in one-letter code: Leucine--tRNA ligase (890 aa).

The 'HIGH' region signature appears at 48 to 58 (PYPSGKLHMGH). The 'KMSKS' region motif lies at 645 to 649 (KMSKS). Residue Lys648 coordinates ATP.

This sequence belongs to the class-I aminoacyl-tRNA synthetase family.

The protein resides in the cytoplasm. It catalyses the reaction tRNA(Leu) + L-leucine + ATP = L-leucyl-tRNA(Leu) + AMP + diphosphate. The protein is Leucine--tRNA ligase of Polynucleobacter necessarius subsp. necessarius (strain STIR1).